The following is a 240-amino-acid chain: Cytochrome c-551 (240 aa).

Residues Cys41, Cys44, His45, Cys128, Cys132, and His133 each coordinate heme c.

In terms of processing, binds 2 heme c groups per subunit.

In Rhodocyclus tenuis (Rhodospirillum tenue), this protein is Cytochrome c-551.